The sequence spans 107 residues: UPF0122 protein EAT1b_2891 (107 aa).

This sequence belongs to the UPF0122 family.

Functionally, might take part in the signal recognition particle (SRP) pathway. This is inferred from the conservation of its genetic proximity to ftsY/ffh. May be a regulatory protein. This Exiguobacterium sp. (strain ATCC BAA-1283 / AT1b) protein is UPF0122 protein EAT1b_2891.